Reading from the N-terminus, the 1115-residue chain is Calcium-transporting ATPase PAT1 (1115 aa).

At 1–99 (MTGSHEMESI…SIVLDALSDH (99 aa)) the chain is on the stromal side. The helical transmembrane segment at 100-120 (ILILLIVAAVVSIVLGSIDYT) threads the bilayer. Residues 121 to 126 (SDHPET) lie on the Lumenal side of the membrane. The chain crosses the membrane as a helical span at residues 127–147 (GWIDGVAILVAVILVVGITSL). The Stromal portion of the chain corresponds to 148-235 (NDFKNQARFR…KGQPQDNMDP (88 aa)). The helical transmembrane segment at 236–256 (FLISGSMVIEGFGTMLVTAVG) threads the bilayer. The Lumenal segment spans residues 257 to 287 (VNSFNGKTMMGLRVASEDTPLQMKLSVLASR). Residues 288–308 (IGYFGMGAAILMLLIAIPKYF) form a helical membrane-spanning segment. At 309 to 328 (IQRKVHDIEITREDAQPIVQ) the chain is on the stromal side. The helical transmembrane segment at 329–349 (LVISAITIVVVAVPEGLPLAV) threads the bilayer. At 350–735 (TMALAYGMMK…GRNIYDAICK (386 aa)) the chain is on the lumenal side. D385 acts as the 4-aspartylphosphate intermediate in catalysis. 2 residues coordinate Mg(2+): D678 and D682. Residues 736–756 (FLQFQLTVNVVAVTVAFIGTL) form a helical membrane-spanning segment. The Stromal portion of the chain corresponds to 757 to 832 (TSDVVEDKDN…GKNAPLITRS (76 aa)). Positions 762–784 (EDKDNSSSSGSADKVTEEEPRQG) are disordered. Residues 833 to 853 (MWKNIIGQAALQLAILFTILY) traverse the membrane as a helical segment. Residues 854–873 (QGHNIFQHFVPQAHGPIIKN) lie on the Lumenal side of the membrane. Residues 874–894 (GLHHYTLVFNCFVFLQLFNEI) traverse the membrane as a helical segment. At 895 to 913 (NARVLGSRTNPFKNFFNNP) the chain is on the stromal side. Residues 914 to 934 (IFIAVMIFTLGVQIIFVTFGG) form a helical membrane-spanning segment. Over 935 to 943 (SATSTDSLY) the chain is Lumenal. Residues 944–964 (IVEWICCVVVGAISLPVGLLL) traverse the membrane as a helical segment. Topologically, residues 965-1115 (RKIPIREPVV…LHLPVNQINN (151 aa)) are stromal. A disordered region spans residues 984 to 1056 (AVYTSPSPNP…IPSSSSNLVN (73 aa)). Residues 1040–1053 (NDNINTPIPSSSSN) are compositionally biased toward low complexity.

It belongs to the cation transport ATPase (P-type) (TC 3.A.3) family. Type IIB subfamily.

The protein localises to the contractile vacuole membrane. Its subcellular location is the cell membrane. The catalysed reaction is Ca(2+)(in) + ATP + H2O = Ca(2+)(out) + ADP + phosphate + H(+). In terms of biological role, calcium ATPase involved in Ca(2+) homeostasis as a component of the contractile vacuole complex. The sequence is that of Calcium-transporting ATPase PAT1 (patA) from Dictyostelium discoideum (Social amoeba).